A 140-amino-acid chain; its full sequence is Nucleoside diphosphate kinase (140 aa).

ATP is bound by residues Lys-11, Phe-59, Arg-87, Thr-93, Arg-104, and Asn-114. His-117 functions as the Pros-phosphohistidine intermediate in the catalytic mechanism.

The protein belongs to the NDK family. Homotetramer. Requires Mg(2+) as cofactor.

It localises to the cytoplasm. It carries out the reaction a 2'-deoxyribonucleoside 5'-diphosphate + ATP = a 2'-deoxyribonucleoside 5'-triphosphate + ADP. The catalysed reaction is a ribonucleoside 5'-diphosphate + ATP = a ribonucleoside 5'-triphosphate + ADP. Its function is as follows. Major role in the synthesis of nucleoside triphosphates other than ATP. The ATP gamma phosphate is transferred to the NDP beta phosphate via a ping-pong mechanism, using a phosphorylated active-site intermediate. The polypeptide is Nucleoside diphosphate kinase (Bartonella henselae (strain ATCC 49882 / DSM 28221 / CCUG 30454 / Houston 1) (Rochalimaea henselae)).